The chain runs to 432 residues: MGRGAGSTALGLFQILPVFLCIFPPVTSPCKILKCNSEFWAATSGSHHLGAEETPEFCTALRAYAHCTRRTARTCRGDLAYHSAVHGIDDLMVQHNCSKDGPTSQPRLRTLPPGDSQERSDSPEICHYEKSFHKHSAAPNYTHCGLFGDPHLRTFTDTFQTCKVQGAWPLIDNNYLNVQVTNTPVLPGSSATATSKLTIIFKSFQECVEQKVYQAEMDELPAAFADGSKNGGDKHGANSLKITEKVSGQHIEIQAKYIGTTIVVRQVGRYLTFAVRMPEEVVNAVEDRDSQGLYLCLRGCPLNQQIDFQTFRLAQAAEGRARRKGPSLPAPPEAFTYESATAKCREKLPVEDLYFQSCVFDLLTTGDVNFMLAAYYAFEDVKMLHSNKDKLHLYERTRALAPGNAAPSEHPWALPALWVALLSLSQCWLGLL.

Positions 1–29 (MGRGAGSTALGLFQILPVFLCIFPPVTSP) are cleaved as a signal peptide. Positions 30–149 (CKILKCNSEF…NYTHCGLFGD (120 aa)) are cleaved as a propeptide — removed in mature form. An N-linked (GlcNAc...) asparagine glycan is attached at N96. Residues 99–122 (KDGPTSQPRLRTLPPGDSQERSDS) form a disordered region. 2 disulfides stabilise this stretch: C126–C207 and C144–C296. A glycan (N-linked (GlcNAc...) asparagine) is linked at N140. N404 carries GPI-anchor amidated asparagine lipidation. Positions 405–432 (AAPSEHPWALPALWVALLSLSQCWLGLL) are cleaved as a propeptide — removed in mature form.

This sequence belongs to the repulsive guidance molecule (RGM) family. Autocatalytically cleaved at low pH; the two chains remain linked via two disulfide bonds.

The protein resides in the cell membrane. Its function is as follows. Acts as an axon-specific repulsive guidance molecule in the retinotectal system. Repulsive for a subset of axons of the temporal half of the retina. Provides thus positional information for the temporal axons invading the optic tectum in the stratum opticum. The protein is Repulsive guidance molecule A (RGMA) of Gallus gallus (Chicken).